The sequence spans 208 residues: Urease accessory protein UreE (208 aa).

Residues 145 to 195 form a disordered region; the sequence is AEAHGHGQAHAHDHHDHDHHDHGHDHAHHDHAHHDHAHDHHGHDHAHDHAH.

Belongs to the UreE family.

The protein localises to the cytoplasm. Its function is as follows. Involved in urease metallocenter assembly. Binds nickel. Probably functions as a nickel donor during metallocenter assembly. The polypeptide is Urease accessory protein UreE (Azorhizobium caulinodans (strain ATCC 43989 / DSM 5975 / JCM 20966 / LMG 6465 / NBRC 14845 / NCIMB 13405 / ORS 571)).